The sequence spans 498 residues: Glycerol kinase (498 aa).

T11 contributes to the ADP binding site. Residues T11, S12, and S13 each coordinate ATP. T11 contacts sn-glycerol 3-phosphate. Residue R15 coordinates ADP. Sn-glycerol 3-phosphate contacts are provided by R81, E82, Y133, and D242. The glycerol site is built by R81, E82, Y133, D242, and Q243. ADP-binding residues include T264 and G307. T264, G307, Q311, and G412 together coordinate ATP. 2 residues coordinate ADP: G412 and N416.

This sequence belongs to the FGGY kinase family.

The enzyme catalyses glycerol + ATP = sn-glycerol 3-phosphate + ADP + H(+). It participates in polyol metabolism; glycerol degradation via glycerol kinase pathway; sn-glycerol 3-phosphate from glycerol: step 1/1. With respect to regulation, inhibited by fructose 1,6-bisphosphate (FBP). Key enzyme in the regulation of glycerol uptake and metabolism. Catalyzes the phosphorylation of glycerol to yield sn-glycerol 3-phosphate. This chain is Glycerol kinase, found in Delftia acidovorans (strain DSM 14801 / SPH-1).